Reading from the N-terminus, the 486-residue chain is Ribulose bisphosphate carboxylase large chain (486 aa).

Residues asparagine 126 and threonine 176 each coordinate substrate. Lysine 178 acts as the Proton acceptor in catalysis. Position 180 (lysine 180) interacts with substrate. Mg(2+)-binding residues include lysine 204, aspartate 206, and glutamate 207. Residue lysine 204 is modified to N6-carboxylysine. Residue histidine 296 is the Proton acceptor of the active site. Positions 297, 329, and 381 each coordinate substrate.

This sequence belongs to the RuBisCO large chain family. Type I subfamily. As to quaternary structure, heterohexadecamer of 8 large chains and 8 small chains. Requires Mg(2+) as cofactor.

It catalyses the reaction 2 (2R)-3-phosphoglycerate + 2 H(+) = D-ribulose 1,5-bisphosphate + CO2 + H2O. It carries out the reaction D-ribulose 1,5-bisphosphate + O2 = 2-phosphoglycolate + (2R)-3-phosphoglycerate + 2 H(+). In terms of biological role, ruBisCO catalyzes two reactions: the carboxylation of D-ribulose 1,5-bisphosphate, the primary event in carbon dioxide fixation, as well as the oxidative fragmentation of the pentose substrate. Both reactions occur simultaneously and in competition at the same active site. The polypeptide is Ribulose bisphosphate carboxylase large chain (Methylacidiphilum infernorum (isolate V4) (Methylokorus infernorum (strain V4))).